We begin with the raw amino-acid sequence, 200 residues long: Anthranilate synthase component 2, pyocyanine specific (200 aa).

In terms of domain architecture, Glutamine amidotransferase type-1 spans 2 to 195 (RITLLDNFDS…LLWCGALAVR (194 aa)). 56–58 (GPG) provides a ligand contact to L-glutamine. The Nucleophile; for GATase activity role is filled by C83. L-glutamine contacts are provided by residues Q87 and 133 to 134 (SL). Catalysis depends on for GATase activity residues H169 and E171.

Heterotetramer consisting of two non-identical subunits: a beta subunit (PhnB) and a large alpha subunit (PhnA).

The enzyme catalyses chorismate + L-glutamine = anthranilate + pyruvate + L-glutamate + H(+). The protein operates within secondary metabolite biosynthesis; pyocyanine biosynthesis. Part of a heterotetrameric complex that catalyzes the two-step biosynthesis of anthranilate, a precursor for Pseudomonas quinolone signal (2-heptyl-3-hydroxy-4-quinolone; PQS) production which is required to induce the genes for the biosynthesis of the virulence factor pyocyanine (PCN), a characteristic blue-green phenazine pigment produced by P.aeruginosa. In the first step, the glutamine-binding beta subunit (PhnB) of anthranilate synthase (AS) provides the glutamine amidotransferase activity which generates ammonia as a substrate that, along with chorismate, is used in the second step, catalyzed by the large alpha subunit of AS (PhnA) to produce anthranilate. The polypeptide is Anthranilate synthase component 2, pyocyanine specific (Pseudomonas aeruginosa (strain ATCC 15692 / DSM 22644 / CIP 104116 / JCM 14847 / LMG 12228 / 1C / PRS 101 / PAO1)).